A 696-amino-acid polypeptide reads, in one-letter code: DNA-directed RNA polymerase subunit beta' (696 aa).

4 residues coordinate Zn(2+): C70, C72, C85, and C88. The Mg(2+) site is built by D540, D542, and D544.

The protein belongs to the RNA polymerase beta' chain family. RpoC1 subfamily. As to quaternary structure, in plastids the minimal PEP RNA polymerase catalytic core is composed of four subunits: alpha, beta, beta', and beta''. When a (nuclear-encoded) sigma factor is associated with the core the holoenzyme is formed, which can initiate transcription. The cofactor is Mg(2+). It depends on Zn(2+) as a cofactor.

The protein localises to the plastid. The protein resides in the chloroplast. The catalysed reaction is RNA(n) + a ribonucleoside 5'-triphosphate = RNA(n+1) + diphosphate. In terms of biological role, DNA-dependent RNA polymerase catalyzes the transcription of DNA into RNA using the four ribonucleoside triphosphates as substrates. This Phaeodactylum tricornutum (strain CCAP 1055/1) protein is DNA-directed RNA polymerase subunit beta'.